A 99-amino-acid chain; its full sequence is uncharacterized protein (99 aa).

A disordered region spans residues 1–99; that stretch reads MSDFPPSYQQ…KYHSKSDVGF (99 aa). Positions 19-29 are enriched in polar residues; it reads QESSTSNNASE.

This is an uncharacterized protein from Schizosaccharomyces pombe (strain 972 / ATCC 24843) (Fission yeast).